A 312-amino-acid polypeptide reads, in one-letter code: Pyridoxal kinase (312 aa).

Position 1 is an N-acetylmethionine (methionine 1). Pyridoxal contacts are provided by serine 12 and threonine 47. A pyridoxal 5'-phosphate-binding site is contributed by threonine 47. Serine 59 carries the post-translational modification Phosphoserine. Residue aspartate 113 coordinates ATP. Aspartate 113 serves as a coordination point for Na(+). Residue aspartate 118 coordinates Mg(2+). Threonine 148 contacts Na(+). 150–153 contacts ATP; it reads NQFE. The residue at position 164 (serine 164) is a Phosphoserine. Threonine 186 lines the Na(+) pocket. 186–187 is an ATP binding site; sequence TS. Serine 213 carries the post-translational modification Phosphoserine. ATP contacts are provided by residues 226–228 and threonine 233; that span reads VDA. Residue 234 to 235 coordinates pyridoxal 5'-phosphate; that stretch reads GD. Catalysis depends on aspartate 235, which acts as the Proton acceptor. Serine 285 is modified (phosphoserine).

It belongs to the pyridoxine kinase family. Homodimer. The cofactor is Mg(2+). It depends on Zn(2+) as a cofactor. Requires Co(2+) as cofactor. Mn(2+) serves as cofactor. As to expression, ubiquitous. Highly expressed in testis. In adult testis and spermatozoa.

The protein localises to the cytoplasm. It is found in the cytosol. The enzyme catalyses pyridoxal + ATP = pyridoxal 5'-phosphate + ADP + H(+). It carries out the reaction pyridoxamine + ATP = pyridoxamine 5'-phosphate + ADP + H(+). The catalysed reaction is pyridoxine + ATP = pyridoxine 5'-phosphate + ADP + H(+). It functions in the pathway cofactor metabolism; pyridoxal 5'-phosphate salvage; pyridoxal 5'-phosphate from pyridoxal: step 1/1. Its pathway is cofactor metabolism; pyridoxal 5'-phosphate salvage; pyridoxine 5'-phosphate from pyridoxine: step 1/1. The protein operates within cofactor metabolism; pyridoxal 5'-phosphate salvage; pyridoxamine 5'-phosphate from pyridoxamine: step 1/1. With respect to regulation, catalytic activity is inhibited competitively by 4-deoxypyridoxine, and is also inhibited by the benzodiazepine receptor ligands 1012S and ethyl-beta-carboline-3-carboxylate. Inhibited by ginkgotoxin, theophylline, lamotrigine, enprofylline, theobromine, and caffeine. Activity is increased in the presence of K(+)or Na(+). Its function is as follows. Catalyzes the phosphorylation of the dietary vitamin B6 vitamers pyridoxal (PL), pyridoxine (PN) and pyridoxamine (PM) to form pyridoxal 5'-phosphate (PLP), pyridoxine 5'-phosphate (PNP) and pyridoxamine 5'-phosphate (PMP), respectively. PLP is the active form of vitamin B6, and acts as a cofactor for over 140 different enzymatic reactions. The sequence is that of Pyridoxal kinase from Homo sapiens (Human).